Consider the following 142-residue polypeptide: Coactosin-like protein (142 aa).

A2 is subject to N-acetylalanine. Residues 2–130 enclose the ADF-H domain; it reads ATKIDKEACR…EEDFIKSELK (129 aa). A flexible and important for F-actin binding region spans residues 66-75; that stretch reads TGDAMSKRSK. 2 positions are modified to N6-acetyllysine: K102 and K126.

The protein belongs to the actin-binding proteins ADF family. Coactosin subfamily. As to quaternary structure, interacts with 5-lipoxygenase (ALOX5/5LO) in a calcium-independent manner. Binds to F-actin with a stoichiometry of 1:2. Widely expressed with highest levels in placenta, lung, kidney and peripheral blood leukocytes and lower levels in brain, liver and pancreas.

It localises to the cytoplasm. The protein localises to the cytoskeleton. It is found in the nucleus. Binds to F-actin in a calcium-independent manner. Has no direct effect on actin depolymerization. Acts as a chaperone for ALOX5 (5LO), influencing both its stability and activity in leukotrienes synthesis. The polypeptide is Coactosin-like protein (COTL1) (Homo sapiens (Human)).